A 517-amino-acid chain; its full sequence is Crotonobetaine/carnitine--CoA ligase (517 aa).

Belongs to the ATP-dependent AMP-binding enzyme family.

The enzyme catalyses 4-(trimethylamino)butanoate + ATP + CoA = 4-(trimethylamino)butanoyl-CoA + AMP + diphosphate. It carries out the reaction crotonobetaine + ATP + CoA = crotonobetainyl-CoA + AMP + diphosphate. It catalyses the reaction (R)-carnitine + ATP + CoA = (R)-carnitinyl-CoA + AMP + diphosphate. Its pathway is amine and polyamine metabolism; carnitine metabolism. Catalyzes the transfer of CoA to carnitine, generating the initial carnitinyl-CoA needed for the CaiB reaction cycle. Also has activity toward crotonobetaine and gamma-butyrobetaine. This is Crotonobetaine/carnitine--CoA ligase from Escherichia coli O9:H4 (strain HS).